The chain runs to 217 residues: 3,4-dihydroxy-2-butanone 4-phosphate synthase (217 aa).

Residues arginine 37–glutamate 38, aspartate 42, arginine 150–threonine 154, and glutamate 174 each bind D-ribulose 5-phosphate. Position 38 (glutamate 38) interacts with Mg(2+). Histidine 153 lines the Mg(2+) pocket.

Belongs to the DHBP synthase family. In terms of assembly, homodimer. Mg(2+) serves as cofactor. Requires Mn(2+) as cofactor.

It carries out the reaction D-ribulose 5-phosphate = (2S)-2-hydroxy-3-oxobutyl phosphate + formate + H(+). It participates in cofactor biosynthesis; riboflavin biosynthesis; 2-hydroxy-3-oxobutyl phosphate from D-ribulose 5-phosphate: step 1/1. Functionally, catalyzes the conversion of D-ribulose 5-phosphate to formate and 3,4-dihydroxy-2-butanone 4-phosphate. The protein is 3,4-dihydroxy-2-butanone 4-phosphate synthase of Pseudoalteromonas translucida (strain TAC 125).